The following is a 680-amino-acid chain: MALDKLDLYVIIVLAVAVAAYFAKNQFLDQPQDTGFLSNDTAGGNSRDILETLKKNNKNTLLLFGSQTGTAEDYANKLSREIHSRFGLKTMVADFADYDWDNFGDIPNDILVFFIVATYGEGEPTDNADEFHTWLTDEADTLSTLRYTVFGLGNSTYEFYNAIGRKFDRLLEEKGGERFADYGEGDDGTGTLDEDFLTWKDNVFDTLKNDLNFEERELKYEPNVKLTERDDLTVDDSEVSLGEPNKKYIQSEEIDLTKGPFDHTHPYLAKISKTRELFASKERNCVHVEFDVSESNLKYTTGDHLAVWPSNSDENIAKFIKCFGLDDKINTVFELKALDSTYQIPFPNPITYGAVVRHHLEISGPVSRQFFLAIAGFAPDEETKKTFTRIGNDKQEFANKITRKKLNVADALLFASNGRPWSDVPFEFIIENVPHLQPRYYSISSSSLSEKQTINITAVVEVEEEADGRAVTGVVTNLLKNIEIEQNKTGEKPVVHYDLSGPRNKFNKFKLPVHVRRSNFKLPKNTTTPVILIGPGTGVAPLRGFVRERVQQVKNGVNVGKTVLFYGCRNEHDDFLYKQEWSEYASVLGENFEMFTAFSRQDPSKKVYVQDKIAENSKVVNDLLNEGAIIYVCGDASRMARDVQSTIAKIVAKHREIQEDKAVELVKSWKVQNRYQEDVW.

Over 1-5 the chain is Lumenal; sequence MALDK. The chain crosses the membrane as a helical span at residues 6 to 23; the sequence is LDLYVIIVLAVAVAAYFA. Over 24 to 680 the chain is Cytoplasmic; sequence KNQFLDQPQD…VQNRYQEDVW (657 aa). One can recognise a Flavodoxin-like domain in the interval 60–204; it reads TLLLFGSQTG…DFLTWKDNVF (145 aa). FMN-binding positions include 66-71, 117-120, 152-161, and Asp-187; these read SQTGTA, ATYG, and LGNSTYEFYN. Positions 264–509 constitute an FAD-binding FR-type domain; sequence THPYLAKISK…SGPRNKFNKF (246 aa). Arg-283 contributes to the NADP(+) binding site. FAD-binding positions include 439-442, 457-459, and 473-476; these read RYYS, TAV, and GVVT. NADP(+) is bound by residues Thr-537, 599 to 600, 606 to 610, and Asp-642; these read SR and KVYVQ. Trp-680 serves as a coordination point for FAD.

This sequence belongs to the NADPH--cytochrome P450 reductase family. It in the N-terminal section; belongs to the flavodoxin family. The protein in the C-terminal section; belongs to the flavoprotein pyridine nucleotide cytochrome reductase family. FAD is required as a cofactor. The cofactor is FMN.

Its subcellular location is the endoplasmic reticulum membrane. It is found in the mitochondrion outer membrane. The protein resides in the cell membrane. It carries out the reaction 2 oxidized [cytochrome P450] + NADPH = 2 reduced [cytochrome P450] + NADP(+) + H(+). This enzyme is required for electron transfer from NADP to cytochrome P450 in microsomes. It can also provide electron transfer to heme oxygenase and cytochrome B5. Involved in ergosterol biosynthesis. In Candida maltosa (Yeast), this protein is NADPH--cytochrome P450 reductase.